The following is an 878-amino-acid chain: Phosphoenolpyruvate carboxylase (878 aa).

Catalysis depends on residues His-140 and Lys-545.

This sequence belongs to the PEPCase type 1 family. The cofactor is Mg(2+).

The catalysed reaction is oxaloacetate + phosphate = phosphoenolpyruvate + hydrogencarbonate. In terms of biological role, forms oxaloacetate, a four-carbon dicarboxylic acid source for the tricarboxylic acid cycle. The chain is Phosphoenolpyruvate carboxylase from Pseudomonas syringae pv. syringae (strain B728a).